Consider the following 117-residue polypeptide: Large ribosomal subunit protein bL20 (117 aa).

It belongs to the bacterial ribosomal protein bL20 family.

Functionally, binds directly to 23S ribosomal RNA and is necessary for the in vitro assembly process of the 50S ribosomal subunit. It is not involved in the protein synthesizing functions of that subunit. This is Large ribosomal subunit protein bL20 from Campylobacter jejuni subsp. jejuni serotype O:6 (strain 81116 / NCTC 11828).